The sequence spans 250 residues: ATP synthase subunit a (250 aa).

6 consecutive transmembrane segments (helical) span residues 26 to 46 (FTNA…FLYF), 84 to 104 (FFPL…LGMF), 114 to 134 (IIVT…YGFY), 143 to 163 (VFVP…IEII), 193 to 213 (FVAS…LPLI), and 216 to 236 (VALT…FAVL).

This sequence belongs to the ATPase A chain family. F-type ATPases have 2 components, CF(1) - the catalytic core - and CF(0) - the membrane proton channel. CF(1) has five subunits: alpha(3), beta(3), gamma(1), delta(1), epsilon(1). CF(0) has three main subunits: a(1), b(2) and c(9-12). The alpha and beta chains form an alternating ring which encloses part of the gamma chain. CF(1) is attached to CF(0) by a central stalk formed by the gamma and epsilon chains, while a peripheral stalk is formed by the delta and b chains.

The protein resides in the cell inner membrane. Its function is as follows. Key component of the proton channel; it plays a direct role in the translocation of protons across the membrane. The chain is ATP synthase subunit a from Rhizobium etli (strain ATCC 51251 / DSM 11541 / JCM 21823 / NBRC 15573 / CFN 42).